The following is an 823-amino-acid chain: MDNTYNPQEVEEQAQQYWHKKQSFNVTEDLNKEKFYCLSMFPYPSGTLHMGHVRNYTLGDVIARYQRALGKNVLQPIGWDAFGLPAENAAIKNKIPPAEWTRKNIAAMKEQFLRLGNAYDWKRELTTCDPEYYRWEQWFFIRLFEKGLVYKKNAVVNWDPVDQTVLANEQVVDGRGWRSGALVERKEISQWFIKITSYADELLSSLDSLDEWPAQVKQMQRNWIGKSIGTEIYFNVNNYPKRLKIYTTRPDTLMGATYLAVATDHPLAKEAASNNKKVQEFLDSCQGIKIAEAELATMEKRGIDTGMTAIHPITGKELPIWVANFVLMQYGSGAVMAVPAHDQRDWEFAQKYQLPVKQVIKPIDIEHDFNQSAYTEEGILINSNQFDNLLSSKAIQVITNFLEENDAGKATINYRLRDWGVSRQRYWGTPIPMIICEQCGIVPVPDEELPVVLPENVDFTGTGSPLTQCKEFVNVTCPKCGQDATRETDTFDTFVESSWYYARFACKGQENAMLDDRAKYWTPVDQYIGGIEHAVMHLLYARFFHKLMRDEGLVNSDEPFKALLTQGMVLKDGHKMSKSLGNVVDPNHLINTYGADTARLFVMFASPPEQSLEWSDSGVEGAHRFLKRVWAFSHQHRDMLIDINDSILSGNGHVDWKEAESRLKKSRHIVHQILAQATHDYDRNQFNTVVSGCMKLFNEISDYSIETENDKFFIHSSISILLRLLAPITPHICHCLWQQLGFDKAIIDAPWPKVDKSALKTDEVDYVVQVNGKLRAQFTASTDATEEELIAAAKEHAHNFVVNHTIKKAIIVPHRQLINLVIG.

The 'HIGH' region motif lies at 42-52 (PYPSGTLHMGH). Positions 575-579 (KMSKS) match the 'KMSKS' region motif. Lys578 is a binding site for ATP.

This sequence belongs to the class-I aminoacyl-tRNA synthetase family.

Its subcellular location is the cytoplasm. It catalyses the reaction tRNA(Leu) + L-leucine + ATP = L-leucyl-tRNA(Leu) + AMP + diphosphate. The sequence is that of Leucine--tRNA ligase from Legionella pneumophila (strain Corby).